Consider the following 212-residue polypeptide: Mediator of RNA polymerase II transcription subunit 20 (212 aa).

It belongs to the Mediator complex subunit 20 family. As to quaternary structure, interacts with PPARG. Component of the Mediator complex, which is composed of MED1, MED4, MED6, MED7, MED8, MED9, MED10, MED11, MED12, MED13, MED13L, MED14, MED15, MED16, MED17, MED18, MED19, MED20, MED21, MED22, MED23, MED24, MED25, MED26, MED27, MED29, MED30, MED31, CCNC, CDK8 and CDC2L6/CDK11. The MED12, MED13, CCNC and CDK8 subunits form a distinct module termed the CDK8 module. Mediator containing the CDK8 module is less active than Mediator lacking this module in supporting transcriptional activation. Individual preparations of the Mediator complex lacking one or more distinct subunits have been variously termed ARC, CRSP, DRIP, PC2, SMCC and TRAP.

It localises to the nucleus. Component of the Mediator complex, a coactivator involved in the regulated transcription of nearly all RNA polymerase II-dependent genes. Mediator functions as a bridge to convey information from gene-specific regulatory proteins to the basal RNA polymerase II transcription machinery. Mediator is recruited to promoters by direct interactions with regulatory proteins and serves as a scaffold for the assembly of a functional preinitiation complex with RNA polymerase II and the general transcription factors. In Homo sapiens (Human), this protein is Mediator of RNA polymerase II transcription subunit 20 (MED20).